The chain runs to 122 residues: MVQQYTRLNVADNTGAKKIMCINVLGGSRKLQAKVGDVIVAAVKKSSPDAQAKSGTVVKAVVVRITKPYARPDGSYIKFDDNAAVILNDKMEPKGTRIFGPVARELRDKKFTKILSLAPEVL.

Belongs to the universal ribosomal protein uL14 family. As to quaternary structure, part of the 50S ribosomal subunit. Forms a cluster with proteins L3 and L19. In the 70S ribosome, L14 and L19 interact and together make contacts with the 16S rRNA in bridges B5 and B8.

Its function is as follows. Binds to 23S rRNA. Forms part of two intersubunit bridges in the 70S ribosome. In Dehalococcoides mccartyi (strain ATCC BAA-2266 / KCTC 15142 / 195) (Dehalococcoides ethenogenes (strain 195)), this protein is Large ribosomal subunit protein uL14.